Reading from the N-terminus, the 315-residue chain is tRNA uridine(34) hydroxylase (315 aa).

Residues 122-223 (SDPDVLVIDT…YLEQIPQPES (102 aa)) enclose the Rhodanese domain. Cys-183 acts as the Cysteine persulfide intermediate in catalysis.

This sequence belongs to the TrhO family.

The enzyme catalyses uridine(34) in tRNA + AH2 + O2 = 5-hydroxyuridine(34) in tRNA + A + H2O. Catalyzes oxygen-dependent 5-hydroxyuridine (ho5U) modification at position 34 in tRNAs. In Caulobacter vibrioides (strain ATCC 19089 / CIP 103742 / CB 15) (Caulobacter crescentus), this protein is tRNA uridine(34) hydroxylase.